Reading from the N-terminus, the 246-residue chain is Triosephosphate isomerase (246 aa).

Residue 9–11 (NWK) participates in substrate binding. H91 acts as the Electrophile in catalysis. The active-site Proton acceptor is the E161. Substrate-binding positions include G167, S206, and 227–228 (GG).

The protein belongs to the triosephosphate isomerase family. Homodimer.

Its subcellular location is the cytoplasm. It carries out the reaction D-glyceraldehyde 3-phosphate = dihydroxyacetone phosphate. The protein operates within carbohydrate biosynthesis; gluconeogenesis. It functions in the pathway carbohydrate degradation; glycolysis; D-glyceraldehyde 3-phosphate from glycerone phosphate: step 1/1. In terms of biological role, involved in the gluconeogenesis. Catalyzes stereospecifically the conversion of dihydroxyacetone phosphate (DHAP) to D-glyceraldehyde-3-phosphate (G3P). This Ruegeria sp. (strain TM1040) (Silicibacter sp.) protein is Triosephosphate isomerase.